A 72-amino-acid polypeptide reads, in one-letter code: Translation initiation factor IF-1 (72 aa).

The region spanning 1–72 (MAKDDVIEVE…TRGRIVWRGK (72 aa)) is the S1-like domain.

The protein belongs to the IF-1 family. In terms of assembly, component of the 30S ribosomal translation pre-initiation complex which assembles on the 30S ribosome in the order IF-2 and IF-3, IF-1 and N-formylmethionyl-tRNA(fMet); mRNA recruitment can occur at any time during PIC assembly.

The protein localises to the cytoplasm. One of the essential components for the initiation of protein synthesis. Stabilizes the binding of IF-2 and IF-3 on the 30S subunit to which N-formylmethionyl-tRNA(fMet) subsequently binds. Helps modulate mRNA selection, yielding the 30S pre-initiation complex (PIC). Upon addition of the 50S ribosomal subunit IF-1, IF-2 and IF-3 are released leaving the mature 70S translation initiation complex. The chain is Translation initiation factor IF-1 from Caldanaerobacter subterraneus subsp. tengcongensis (strain DSM 15242 / JCM 11007 / NBRC 100824 / MB4) (Thermoanaerobacter tengcongensis).